A 159-amino-acid polypeptide reads, in one-letter code: 17 kDa surface antigen (159 aa).

The first 19 residues, 1-19 (MKLLSKIMIIALATSMLQA), serve as a signal peptide directing secretion. Cys-20 carries the N-palmitoyl cysteine lipid modification. Cys-20 carries S-diacylglycerol cysteine lipidation.

It belongs to the rickettsiale 17 kDa surface antigen family.

It localises to the cell outer membrane. In Rickettsia conorii (strain ATCC VR-613 / Malish 7), this protein is 17 kDa surface antigen (omp).